Reading from the N-terminus, the 211-residue chain is Recombination protein RecR (211 aa).

The segment at 70–85 adopts a C4-type zinc-finger fold; it reads CRECFLITDREVCPIC. The region spanning 93 to 190 is the Toprim domain; sequence KFICVVEESQ…KITRTAYGFQ (98 aa).

The protein belongs to the RecR family.

May play a role in DNA repair. It seems to be involved in an RecBC-independent recombinational process of DNA repair. It may act with RecF and RecO. The polypeptide is Recombination protein RecR (Aquifex aeolicus (strain VF5)).